A 350-amino-acid polypeptide reads, in one-letter code: Fe-S cluster assembly protein dre2 (350 aa).

The tract at residues 23–156 (TSFNLRTLLL…KPDHSASVAV (134 aa)) is N-terminal SAM-like domain. A linker region spans residues 157–242 (PLRLRRKDNS…EDTLLTEEDM (86 aa)). A disordered region spans residues 165 to 209 (NSKTTAVSNAGPPVSTVEVPVSGKRKSVDMTEDVPEKDVPKNDVP). Residues 190–208 (KSVDMTEDVPEKDVPKNDV) are compositionally biased toward basic and acidic residues. Residues C252, C263, C266, and C268 each contribute to the [2Fe-2S] cluster site. The tract at residues 252–268 (CAPRAGKRRRACKDCTC) is fe-S binding site A. Positions 313, 316, 324, and 327 each coordinate [4Fe-4S] cluster. 2 short sequence motifs (cx2C motif) span residues 313-316 (CGNC) and 324-327 (CDGC). Residues 313-327 (CGNCSLGDAFRCDGC) are fe-S binding site B.

It belongs to the anamorsin family. As to quaternary structure, monomer. Interacts with TAH18. Interacts with MIA40. The cofactor is [2Fe-2S] cluster. [4Fe-4S] cluster is required as a cofactor.

The protein localises to the cytoplasm. It localises to the mitochondrion intermembrane space. Its function is as follows. Component of the cytosolic iron-sulfur (Fe-S) protein assembly (CIA) machinery required for the maturation of extramitochondrial Fe-S proteins. Part of an electron transfer chain functioning in an early step of cytosolic Fe-S biogenesis, facilitating the de novo assembly of a [4Fe-4S] cluster on the scaffold complex CFD1-NBP35. Electrons are transferred to DRE2 from NADPH via the FAD- and FMN-containing protein TAH18. TAH18-DRE2 are also required for the assembly of the diferric tyrosyl radical cofactor of ribonucleotide reductase (RNR), probably by providing electrons for reduction during radical cofactor maturation in the catalytic small subunit RNR2. This Sclerotinia sclerotiorum (strain ATCC 18683 / 1980 / Ss-1) (White mold) protein is Fe-S cluster assembly protein dre2.